Consider the following 245-residue polypeptide: Terpene cyclase ausL (245 aa).

7 helical membrane-spanning segments follow: residues 17–37 (ILAI…VNYI), 51–71 (IGIL…WMFP), 76–96 (HWQG…LVTL), 113–133 (IVFI…ALAA), 138–158 (ALGF…GGIA), 170–190 (SYLI…KLCI), and 206–226 (MCWF…FLYF).

Belongs to the paxB family.

The protein localises to the membrane. The protein operates within secondary metabolite biosynthesis; terpenoid biosynthesis. Functionally, terpene cyclase; part of the gene cluster A that mediates the biosynthesis of the fungal meroterpenoid acetoxydehydroaustin. The first step of the pathway is the synthesis of 3,5-dimethylorsellinic acid by the polyketide synthase ausA. 3,5-dimethylorsellinic acid is then prenylated by the polyprenyl transferase ausN. Further epoxidation by the FAD-dependent monooxygenase ausM and cyclization by the probable terpene cyclase ausL lead to the formation of protoaustinoid A. Protoaustinoid A is then oxidized to spiro-lactone preaustinoid A3 by the combined action of the FAD-binding monooxygenases ausB and ausC, and the dioxygenase ausE. Acid-catalyzed keto-rearrangement and ring contraction of the tetraketide portion of preaustinoid A3 by ausJ lead to the formation of preaustinoid A4. The aldo-keto reductase ausK, with the help of ausH, is involved in the next step by transforming preaustinoid A4 into isoaustinone which is in turn hydroxylated by the P450 monooxygenase ausI to form austinolide. The cytochrome P450 monooxygenase ausG then modifies austinolide to austinol. Austinol is further acetylated to austin by the O-acetyltransferase ausP, which spontaneously changes to dehydroaustin. The cytochrome P450 monooxygenase then converts dehydroaustin is into 7-dehydrodehydroaustin. The hydroxylation catalyzed by ausR permits the second O-acetyltransferase ausQ to add an additional acetyl group to the molecule, leading to the formation of acetoxydehydroaustin. Due to genetic rearrangements of the clusters and the subsequent loss of some enzymes, the end product of the Penicillium brasilianum austinoid biosynthesis clusters is acetoxydehydroaustin. The protein is Terpene cyclase ausL of Penicillium brasilianum.